We begin with the raw amino-acid sequence, 192 residues long: Thiosulfate reductase electron transfer subunit PhsB (192 aa).

4Fe-4S ferredoxin-type domains are found at residues 8-36, 55-86, and 87-116; these read YVMLHDEKRCIGCQACTVACKVLNDVPEG, THFQFVRVSCQHCENAPCVSVCPTGASYRDEN, and GIVQVDKSRCIGCDYCVAACPFHVRYLNPQ. [4Fe-4S] cluster is bound by residues C17, C20, C23, C27, C64, C67, C72, C76, C96, C99, C102, C106, C123, C126, C139, and C143.

As to quaternary structure, composed of three subunits: PhsA, PhsB and PhsC. It depends on [4Fe-4S] cluster as a cofactor.

Its subcellular location is the cell inner membrane. Component of the PhsABC thiosulfate reductase that catalyzes the reduction of thiosulfate to sulfite and hydrogen sulfide, with menaquinol as the sole electron donor. Proton motive force (PMF) is required to drive transmembrane electron transfer within the reductase. The PhsB subunit transfers electrons between PhsC and PhsA. This is Thiosulfate reductase electron transfer subunit PhsB (phsB) from Salmonella typhi.